Here is a 353-residue protein sequence, read N- to C-terminus: UDP-N-acetylglucosamine--N-acetylmuramyl-(pentapeptide) pyrophosphoryl-undecaprenol N-acetylglucosamine transferase (353 aa).

Residues threonine 10–glycine 12, asparagine 124, serine 183, and glutamine 283 each bind UDP-N-acetyl-alpha-D-glucosamine.

Belongs to the glycosyltransferase 28 family. MurG subfamily.

It localises to the cell inner membrane. It catalyses the reaction di-trans,octa-cis-undecaprenyl diphospho-N-acetyl-alpha-D-muramoyl-L-alanyl-D-glutamyl-meso-2,6-diaminopimeloyl-D-alanyl-D-alanine + UDP-N-acetyl-alpha-D-glucosamine = di-trans,octa-cis-undecaprenyl diphospho-[N-acetyl-alpha-D-glucosaminyl-(1-&gt;4)]-N-acetyl-alpha-D-muramoyl-L-alanyl-D-glutamyl-meso-2,6-diaminopimeloyl-D-alanyl-D-alanine + UDP + H(+). It functions in the pathway cell wall biogenesis; peptidoglycan biosynthesis. In terms of biological role, cell wall formation. Catalyzes the transfer of a GlcNAc subunit on undecaprenyl-pyrophosphoryl-MurNAc-pentapeptide (lipid intermediate I) to form undecaprenyl-pyrophosphoryl-MurNAc-(pentapeptide)GlcNAc (lipid intermediate II). This is UDP-N-acetylglucosamine--N-acetylmuramyl-(pentapeptide) pyrophosphoryl-undecaprenol N-acetylglucosamine transferase from Helicobacter pylori (strain ATCC 700392 / 26695) (Campylobacter pylori).